Reading from the N-terminus, the 485-residue chain is Peroxisomal catalase (485 aa).

Active-site residues include His53 and Asn126. Tyr336 contributes to the heme binding site.

This sequence belongs to the catalase family. As to quaternary structure, homotetramer. Requires heme as cofactor.

It localises to the peroxisome matrix. The catalysed reaction is 2 H2O2 = O2 + 2 H2O. Functionally, catalyzes the degradation of hydrogen peroxide (H(2)O(2)) generated by peroxisomal oxidases to water and oxygen, thereby protecting cells from the toxic effects of hydrogen peroxide. The protein is Peroxisomal catalase (CAT1) of Candida albicans (strain SC5314 / ATCC MYA-2876) (Yeast).